A 184-amino-acid chain; its full sequence is Protein FAM89A (184 aa).

The segment at 148–184 is disordered; it reads YFQEQNSLHDRRDRGPPRDLSLPVSSLSSSDWILESI. A compositionally biased stretch (basic and acidic residues) spans 154-164; that stretch reads SLHDRRDRGPP. Low complexity predominate over residues 167–184; that stretch reads LSLPVSSLSSSDWILESI.

This sequence belongs to the FAM89 family.

The chain is Protein FAM89A (FAM89A) from Homo sapiens (Human).